A 459-amino-acid polypeptide reads, in one-letter code: N,N-dimethyl phenylurea N-demethylase subunit alpha (459 aa).

The 112-residue stretch at 55–166 folds into the Rieske domain; that stretch reads WVFVAHETEI…VESYHGFIFT (112 aa). Cys-97, His-99, Cys-117, and His-120 together coordinate [2Fe-2S] cluster. The Fe cation site is built by His-225, His-230, and Asp-386.

It belongs to the bacterial ring-hydroxylating dioxygenase alpha subunit family. In terms of assembly, pdmA (subunit alpha) and PdmB (subunit beta) form the oxygenase component of a bacterial Rieske non-heme iron oxygenase (RO) system. It depends on [2Fe-2S] cluster as a cofactor. Fe cation serves as cofactor.

The enzyme catalyses a 1,1-dimethyl-3-phenylurea + 2 reduced [2Fe-2S]-[ferredoxin] + O2 + 2 H(+) = a 1-methyl-3-phenylurea + formaldehyde + 2 oxidized [2Fe-2S]-[ferredoxin] + H2O. It carries out the reaction isoproturon + 2 reduced [2Fe-2S]-[ferredoxin] + O2 + 2 H(+) = 1-methyl-3-[4-(propan-2-yl)phenyl]urea + formaldehyde + 2 oxidized [2Fe-2S]-[ferredoxin] + H2O. The catalysed reaction is chlorotoluron + 2 reduced [2Fe-2S]-[ferredoxin] + O2 + 2 H(+) = 3-(3-chloro-4-methylphenyl)-1-methylurea + formaldehyde + 2 oxidized [2Fe-2S]-[ferredoxin] + H2O. It catalyses the reaction metoxuron + 2 reduced [2Fe-2S]-[ferredoxin] + O2 + 2 H(+) = 3-(3-chloro-4-methoxylphenyl)-1-methylurea + formaldehyde + 2 oxidized [2Fe-2S]-[ferredoxin] + H2O. The enzyme catalyses monuron + 2 reduced [2Fe-2S]-[ferredoxin] + O2 + 2 H(+) = 3-(4-chlorophenyl)-1-methylurea + formaldehyde + 2 oxidized [2Fe-2S]-[ferredoxin] + H2O. It carries out the reaction diuron + 2 reduced [2Fe-2S]-[ferredoxin] + O2 + 2 H(+) = 3-(3,4-dichlorophenyl)-1-methylurea + formaldehyde + 2 oxidized [2Fe-2S]-[ferredoxin] + H2O. The catalysed reaction is fluometuron + 2 reduced [2Fe-2S]-[ferredoxin] + O2 + 2 H(+) = 3-[3-(trifluoromethyl)phenyl]-1-methylurea + formaldehyde + 2 oxidized [2Fe-2S]-[ferredoxin] + H2O. It catalyses the reaction fenuron + 2 reduced [2Fe-2S]-[ferredoxin] + O2 + 2 H(+) = 1-methyl-3-phenylurea + formaldehyde + 2 oxidized [2Fe-2S]-[ferredoxin] + H2O. It functions in the pathway xenobiotic degradation. Activity is stimulated in vitro by coexpression of a [3Fe-4S]-type ferredoxin. Part of the multicomponent N,N-dimethyl phenylurea N-demethylase responsible for the initial N-demethylation step during the bacterial metabolism of N,N-dimethyl-substituted phenylurea herbicides. Catalyzes the mono-N-demethylation of N,N-dimethyl-substituted phenylurea herbicides to their mono-N-demethylated derivatives. Is active on isoproturon (IPU), chlorotoluron, metoxuron, monoron, diuron, fluometuron and fenuron, but cannot transform the N-methoxy-N-methyl-substituted herbicides. This is N,N-dimethyl phenylurea N-demethylase subunit alpha from Sphingobium sp. (strain YBL2).